The chain runs to 281 residues: Tumor necrosis factor ligand superfamily member 6 (281 aa).

The Cytoplasmic segment spans residues 1 to 80 (MQQPFNYPYP…LKKRGNHSTG (80 aa)). The tract at residues 20–71 (SSPWAPPGTVLPCPTSVPRRPGQRRPPPPPPPPPLPPPPPPPPLPPLPLPPL) is disordered. Positions 43–70 (RRPPPPPPPPPLPPPPPPPPLPPLPLPP) are enriched in pro residues. A helical; Signal-anchor for type II membrane protein membrane pass occupies residues 81–102 (LCLLVMFFMVLVALVGLGLGMF). The Extracellular portion of the chain corresponds to 103–281 (QLFHLQKELA…SQTFFGLYKL (179 aa)). The span at 118–128 (TSQMHTASSLE) shows a compositional bias: polar residues. A disordered region spans residues 118–142 (TSQMHTASSLEKQIGHPSPPPEKKE). Residues 145 to 281 (KVAHLTGKSN…SQTFFGLYKL (137 aa)) form the THD domain. N-linked (GlcNAc...) asparagine glycosylation occurs at asparagine 184. The cysteines at positions 202 and 233 are disulfide-linked. 2 N-linked (GlcNAc...) asparagine glycosylation sites follow: asparagine 250 and asparagine 260.

Belongs to the tumor necrosis factor family. As to quaternary structure, homotrimer. Interacts with ARHGAP9, BAIAP2L1, BTK, CACNB3, CACNB4, CRK, DLG2, DNMBP, DOCK4, EPS8L3, FGR, FYB1, FYN, HCK, ITK, ITSN2, KALRN, LYN, MACC1, MIA, MPP4, MYO15A, NCF1, NCK1, NCK2, NCKIPSD, OSTF1, PIK3R1, PSTPIP1, RIMBP3C, SAMSN1, SH3GL3, SH3PXD2B, SH3PXD2A, SH3RF2, SKAP2, SNX33, SNX9, SORBS3, SPTA1, SRC, SRGAP1, SRGAP2, SRGAP3, TEC, TJP3 and YES1. In terms of processing, the soluble form derives from the membrane form by proteolytic processing. The membrane-bound form undergoes two successive intramembrane proteolytic cleavages. The first one is processed by ADAM10 producing an N-terminal fragment, which lacks the receptor-binding extracellular domain. This ADAM10-processed FasL (FasL APL) remnant form is still membrane anchored and further processed by SPPL2A that liberates the FasL intracellular domain (FasL ICD). FasL shedding by ADAM10 is a prerequisite for subsequent intramembrane cleavage by SPPL2A in T-cells. N-glycosylated. Glycosylation enhances apoptotic activity. Post-translationally, phosphorylated by FGR on tyrosine residues; this is required for ubiquitination and subsequent internalization. In terms of processing, monoubiquitinated.

The protein resides in the cell membrane. Its subcellular location is the cytoplasmic vesicle lumen. It localises to the lysosome lumen. The protein localises to the secreted. It is found in the nucleus. Its function is as follows. Cytokine that binds to TNFRSF6/FAS, a receptor that transduces the apoptotic signal into cells. Involved in cytotoxic T-cell-mediated apoptosis, natural killer cell-mediated apoptosis and in T-cell development. Initiates fratricidal/suicidal activation-induced cell death (AICD) in antigen-activated T-cells contributing to the termination of immune responses. TNFRSF6/FAS-mediated apoptosis also has a role in the induction of peripheral tolerance. Binds to TNFRSF6B/DcR3, a decoy receptor that blocks apoptosis. In terms of biological role, induces FAS-mediated activation of NF-kappa-B, initiating non-apoptotic signaling pathways. Can induce apoptosis but does not appear to be essential for this process. Cytoplasmic form induces gene transcription inhibition. This chain is Tumor necrosis factor ligand superfamily member 6 (FASLG), found in Homo sapiens (Human).